Here is a 597-residue protein sequence, read N- to C-terminus: Ran-binding protein 9 (597 aa).

One can recognise a B30.2/SPRY domain in the interval 29 to 216 (LNQRLRRLYP…VDANFGQHPF (188 aa)). The region spanning 247 to 279 (WQAMIQKMVASYLVHHSYCATAEAFAKSTDQAV) is the LisH domain. Positions 285–342 (SIKNRQKIQKLVLSGRMGEAIETTQQLYPSLLERNPDLLFMLKVRQFIEMVNGTDSEV) constitute a CTLH domain. Disordered stretches follow at residues 343–375 (RCLG…SSQA), 389–417 (SSSK…VLNG), and 437–475 (SNGV…QSKR). The segment covering 438–456 (NGVSESSSNGFLNGSSTHG) has biased composition (polar residues). The segment covering 459–468 (QEDCDADMEV) has biased composition (acidic residues).

This sequence belongs to the RANBP9/10 family. As to quaternary structure, identified in the CTLH complex that contains at least MAEA, RMND5A (or alternatively its paralog RMND5B), GID8, WDR26, and RANBP9 and/or RANBP10.

It is found in the cytoplasm. The protein resides in the cell membrane. Its subcellular location is the nucleus. Its function is as follows. May act as scaffolding protein, and as adapter protein to couple membrane receptors to intracellular signaling pathways. Acts as a mediator of cell spreading and actin cytoskeleton rearrangement. Core component of the CTLH E3 ubiquitin-protein ligase complex that mediates ubiquitination and subsequent proteasomal degradation of target proteins. In Danio rerio (Zebrafish), this protein is Ran-binding protein 9 (ranbp9).